A 558-amino-acid polypeptide reads, in one-letter code: MADAAVHGHGDHHDTRGFFTRWFMSTNHKDIGILYLFTAGIVGLISVCFTVYMRMELQHPGVQYMCLEGARLIADASAECTPNGHLWNVMITYHGVLMMFFVVIPALFGGFGNYFMPLHIGAPDMAFPRLNNLSYWMYVCGVALGVASLLAPGGNDQMGSGVGWVLYPPLSTTEAGYSMDLAIFAVHVSGASSILGAINIITTFLNMRAPGMTLFKVPLFAWSVFITAWLILLSLPVLAGAITMLLMDRNFGTQFFDPAGGGDPVLYQHILWFFGHPEVYIIILPGFGIISHVISTFAKKPIFGYLPMVLAMAAIGILGFVVWAHHMYTAGMSLTQQAYFMLATMTIAVPTGIKVFSWIATMWGGSIEFKTPMLWAFGFLFLFTVGGVTGVVLSQAPLDRVYHDTYYVVAHFHYVMSLGAVFGIFAGVYYWIGKMSGRQYPEWAGQLHFWMMFIGSNLIFFPQHFLGRQGMPRRYIDYPVEFAYWNNISSIGAYISFASFLFFIGIVFYTLFAGKRVNVPNYWNEHADTLEWTLPSPPPEHTFETLPKREDWDRAHAH.

The Cytoplasmic portion of the chain corresponds to 1–28; it reads MADAAVHGHGDHHDTRGFFTRWFMSTNH. A helical membrane pass occupies residues 29 to 59; it reads KDIGILYLFTAGIVGLISVCFTVYMRMELQH. At 60 to 82 the chain is on the periplasmic side; it reads PGVQYMCLEGARLIADASAECTP. The cysteines at positions 66 and 80 are disulfide-linked. A helical transmembrane segment spans residues 83 to 120; the sequence is NGHLWNVMITYHGVLMMFFVVIPALFGGFGNYFMPLHI. Histidine 94 is a Fe(II)-heme a binding site. Topologically, residues 121–126 are cytoplasmic; sequence GAPDMA. The chain crosses the membrane as a helical span at residues 127–151; sequence FPRLNNLSYWMYVCGVALGVASLLA. At 152-176 the chain is on the periplasmic side; it reads PGGNDQMGSGVGWVLYPPLSTTEAG. The helical transmembrane segment at 177-206 threads the bilayer; sequence YSMDLAIFAVHVSGASSILGAINIITTFLN. Residues 207–217 lie on the Cytoplasmic side of the membrane; it reads MRAPGMTLFKV. The helical transmembrane segment at 218 to 251 threads the bilayer; the sequence is PLFAWSVFITAWLILLSLPVLAGAITMLLMDRNF. The Periplasmic portion of the chain corresponds to 252-262; the sequence is GTQFFDPAGGG. A helical membrane pass occupies residues 263–299; the sequence is DPVLYQHILWFFGHPEVYIIILPGFGIISHVISTFAK. 2 residues coordinate Cu cation: histidine 276 and tyrosine 280. Residues 276–280 constitute a cross-link (1'-histidyl-3'-tyrosine (His-Tyr)); sequence HPEVY. Topologically, residues 300–303 are cytoplasmic; sequence KPIF. A helical membrane pass occupies residues 304–331; sequence GYLPMVLAMAAIGILGFVVWAHHMYTAG. The Cu cation site is built by histidine 325 and histidine 326. A topological domain (periplasmic) is located at residue methionine 332. The chain crosses the membrane as a helical span at residues 333–364; sequence SLTQQAYFMLATMTIAVPTGIKVFSWIATMWG. The Cytoplasmic portion of the chain corresponds to 365–369; sequence GSIEF. A helical membrane pass occupies residues 370-395; sequence KTPMLWAFGFLFLFTVGGVTGVVLSQ. Over 396-404 the chain is Periplasmic; it reads APLDRVYHD. A helical membrane pass occupies residues 405–437; sequence TYYVVAHFHYVMSLGAVFGIFAGVYYWIGKMSG. A heme a3-binding site is contributed by histidine 411. A Fe(II)-heme a-binding site is contributed by histidine 413. Topologically, residues 438–440 are cytoplasmic; it reads RQY. A helical membrane pass occupies residues 441 to 469; that stretch reads PEWAGQLHFWMMFIGSNLIFFPQHFLGRQ. At 470 to 478 the chain is on the periplasmic side; sequence GMPRRYIDY. A helical transmembrane segment spans residues 479–514; sequence PVEFAYWNNISSIGAYISFASFLFFIGIVFYTLFAG. At 515 to 558 the chain is on the cytoplasmic side; the sequence is KRVNVPNYWNEHADTLEWTLPSPPPEHTFETLPKREDWDRAHAH.

Belongs to the heme-copper respiratory oxidase family. It depends on Cu(2+) as a cofactor. The cofactor is heme. Post-translationally, his-276 and Tyr-280 are involved in the formation of a copper-coordinated covalent cross-link at the active site of the catalytic subunit I.

Its subcellular location is the cell inner membrane. The enzyme catalyses 4 Fe(II)-[cytochrome c] + O2 + 8 H(+)(in) = 4 Fe(III)-[cytochrome c] + 2 H2O + 4 H(+)(out). It participates in energy metabolism; oxidative phosphorylation. Functionally, subunit I and II form the functional core of the enzyme complex. Electrons originating in cytochrome c are transferred via heme a and Cu(A) to the binuclear center formed by heme a3 and Cu(B). This cytochrome c oxidase shows proton pump activity across the membrane in addition to the electron transfer. This Paracoccus denitrificans protein is Cytochrome c oxidase subunit 1-beta (ctaDII).